A 96-amino-acid chain; its full sequence is Large ribosomal subunit protein bL27 (96 aa).

A propeptide spanning residues 1 to 9 (MLRLDLQFF) is cleaved from the precursor. Residues 14–35 (GVGSTKNGRDSQSKRLGAKRAD) form a disordered region.

It belongs to the bacterial ribosomal protein bL27 family. The N-terminus is cleaved by ribosomal processing cysteine protease Prp.

This chain is Large ribosomal subunit protein bL27, found in Bacillus cytotoxicus (strain DSM 22905 / CIP 110041 / 391-98 / NVH 391-98).